A 270-amino-acid chain; its full sequence is MSMQTAPIKKITLNHLQAKKNQEKIIAITAYDALFAQIFDPLVDVILVGDSLNMSFFNQNDTLNASVGMMLYHTKAVCAGAKIPFIITDMPFGSYKDEKTALKNAIRVYKETQASAIKLEGGKEKAKLVKTLTDEGVIVVGHIGLMPQFVRLDGGYKIKGKNEEQQKKLLEDALSLEEAGAGLLVLEGITTPIAQKITQTIKIPTIGIGSGKDCDGQILVWSDMLGFFDSFKPKFVREYLKGKELVQNAIKQYADDVKKGNFPNELESYH.

Residues D50 and D89 each contribute to the Mg(2+) site. Residues D50–S51, D89, and K118 each bind 3-methyl-2-oxobutanoate. E120 contacts Mg(2+). E187 serves as the catalytic Proton acceptor.

This sequence belongs to the PanB family. As to quaternary structure, homodecamer; pentamer of dimers. The cofactor is Mg(2+).

The protein resides in the cytoplasm. The catalysed reaction is 3-methyl-2-oxobutanoate + (6R)-5,10-methylene-5,6,7,8-tetrahydrofolate + H2O = 2-dehydropantoate + (6S)-5,6,7,8-tetrahydrofolate. Its pathway is cofactor biosynthesis; (R)-pantothenate biosynthesis; (R)-pantoate from 3-methyl-2-oxobutanoate: step 1/2. In terms of biological role, catalyzes the reversible reaction in which hydroxymethyl group from 5,10-methylenetetrahydrofolate is transferred onto alpha-ketoisovalerate to form ketopantoate. The sequence is that of 3-methyl-2-oxobutanoate hydroxymethyltransferase from Helicobacter pylori (strain Shi470).